The sequence spans 223 residues: Cutinase 4 (223 aa).

Positions M1–S26 are cleaved as a signal peptide. C60 and C133 are joined by a disulfide. Catalysis depends on S144, which acts as the Nucleophile. A disulfide bridge links C187 with C194. D191 is a catalytic residue. Residue H203 is the Proton donor/acceptor of the active site.

It belongs to the cutinase family. The 2 disulfide bonds play a critical role in holding the catalytic residues in juxta-position; reduction of the disulfide bridges results in the complete inactivation of the enzyme.

It is found in the secreted. It catalyses the reaction cutin + H2O = cutin monomers.. In terms of biological role, catalyzes the hydrolysis of complex carboxylic polyesters found in the cell wall of plants. Degrades cutin, a macromolecule that forms the structure of the plant cuticle. Also degrades suberin, a specialized macromolecule found in the cell wall of various plant tissues. This is Cutinase 4 from Emericella nidulans (strain FGSC A4 / ATCC 38163 / CBS 112.46 / NRRL 194 / M139) (Aspergillus nidulans).